A 387-amino-acid polypeptide reads, in one-letter code: Type 2 DNA topoisomerase 6 subunit A (387 aa).

Residues 12–160 (EARKKAADTL…MLILSKEKGK (149 aa)) enclose the Topo IIA-type catalytic domain. Tyrosine 106 acts as the O-(5'-phospho-DNA)-tyrosine intermediate in catalysis. Positions 207 and 259 each coordinate Mg(2+).

The protein belongs to the TOP6A family. Homodimer. Heterotetramer of two Top6A and two Top6B chains. It depends on Mg(2+) as a cofactor.

It catalyses the reaction ATP-dependent breakage, passage and rejoining of double-stranded DNA.. Its function is as follows. Relaxes both positive and negative superturns and exhibits a strong decatenase activity. The polypeptide is Type 2 DNA topoisomerase 6 subunit A (Sulfurisphaera tokodaii (strain DSM 16993 / JCM 10545 / NBRC 100140 / 7) (Sulfolobus tokodaii)).